A 220-amino-acid polypeptide reads, in one-letter code: Inner membrane protein YqjA (220 aa).

At 1 to 27 (MELLTQLLQALWAQDFETLANPSMIGM) the chain is on the periplasmic side. Residues 28 to 48 (LYFVLFVILFLENGLLPAAFL) form a helical membrane-spanning segment. The Cytoplasmic segment spans residues 49 to 52 (PGDS). The next 2 membrane-spanning stretches (helical) occupy residues 53-73 (LLVL…QTIL) and 74-94 (LLTV…RWLG). Topologically, residues 95 to 154 (NTRTVQNWLSHLPAHYHQRAHHLFHKHGLSALLIGRFIAFVRTLLPTIAGLSGLNNARFQ) are cytoplasmic. The chain crosses the membrane as a helical span at residues 155 to 175 (FFNWMSGLLWVLILTTLGYML). At 176–191 (GKTPVFLKYEDQLMSC) the chain is on the periplasmic side. A helical transmembrane segment spans residues 192–212 (LMLLPVVLLVFGLAGSLVVLW). Topologically, residues 213-220 (KKKYGNRG) are cytoplasmic.

The protein belongs to the DedA family.

It localises to the cell inner membrane. May be a membrane transporter required for proton motive force (PMF)-dependent drug efflux. Required, with YghB, for the proper export of certain periplasmic amidases and, possibly, other Tat substrates. May play a role in determining membrane lipid composition. In Escherichia coli (strain K12), this protein is Inner membrane protein YqjA (yqjA).